A 196-amino-acid polypeptide reads, in one-letter code: MSAANMPTTTGAQGSGNQVPTTSTTIVNHFRELIKDPKNLDEASKYLFQTLLDDAVVGIFNETHHLRKSGNLAALDGVPEDSTYRMCEMPNLDIFGISTAKKPMDCTCPNCDRLVAAARFAPHLEKCMGMGRISSRIASRRLATKEGASSAHLHSAGNAGGTDDEDDVDWSSDKRRKKSNQNSRNNGSKKNNGKTF.

The disordered stretch occupies residues 1 to 22 (MSAANMPTTTGAQGSGNQVPTT). An SGF11-type zinc finger spans residues 106–127 (CTCPNCDRLVAAARFAPHLEKC). A disordered region spans residues 144–196 (TKEGASSAHLHSAGNAGGTDDEDDVDWSSDKRRKKSNQNSRNNGSKKNNGKTF). Position 172 is a phosphoserine (Ser-172). Residues 180 to 196 (NQNSRNNGSKKNNGKTF) show a composition bias toward low complexity.

This sequence belongs to the SGF11 family. Component of some SAGA transcription coactivator-HAT complexes, at least composed of Ada2b, not/nonstop, Pcaf/Gcn5, Sgf11 and Spt3. Within the SAGA complex, Sgf11, e(y)2, and not/nonstop form an additional subcomplex of SAGA called the DUB module (deubiquitination module). Interacts directly with not/nonstop. Interacts with the AMEX complex component xmas-2. Interacts with Cbp80; important for promoter recruitment of Sgf11 that is not associated with the DUB module.

Its subcellular location is the nucleus. The protein localises to the nucleoplasm. It localises to the cytoplasm. Its function is as follows. Component of the transcription regulatory histone acetylation (HAT) complex SAGA, a multiprotein complex that activates transcription by remodeling chromatin and mediating histone acetylation and deubiquitination. Within the SAGA complex, participates in a subcomplex that specifically deubiquitinates histone H2B. The SAGA complex is recruited to specific gene promoters by activators, where it is required for transcription. Required for nuclear receptor-mediated transactivation. Binds independently on SAGA to promoters in an RNA-dependent manner. Binds to mRNA and is essential for total mRNA export from the nucleus. Required to counteract heterochromatin silencing. Controls the development of neuronal connectivity in visual system by being required for accurate axon targeting in the optic lobe. Required for expression of ecdysone-induced genes such as br/broad. This Drosophila yakuba (Fruit fly) protein is SAGA-associated factor 11 homolog.